The primary structure comprises 460 residues: tRNA(Ile)-lysidine synthase (460 aa).

37–42 (SGGADS) contributes to the ATP binding site.

This sequence belongs to the tRNA(Ile)-lysidine synthase family.

It localises to the cytoplasm. The enzyme catalyses cytidine(34) in tRNA(Ile2) + L-lysine + ATP = lysidine(34) in tRNA(Ile2) + AMP + diphosphate + H(+). Ligates lysine onto the cytidine present at position 34 of the AUA codon-specific tRNA(Ile) that contains the anticodon CAU, in an ATP-dependent manner. Cytidine is converted to lysidine, thus changing the amino acid specificity of the tRNA from methionine to isoleucine. The chain is tRNA(Ile)-lysidine synthase from Treponema denticola (strain ATCC 35405 / DSM 14222 / CIP 103919 / JCM 8153 / KCTC 15104).